The sequence spans 130 residues: Small ribosomal subunit protein uS8 (130 aa).

Belongs to the universal ribosomal protein uS8 family. Part of the 30S ribosomal subunit. Contacts proteins S5 and S12.

In terms of biological role, one of the primary rRNA binding proteins, it binds directly to 16S rRNA central domain where it helps coordinate assembly of the platform of the 30S subunit. In Hahella chejuensis (strain KCTC 2396), this protein is Small ribosomal subunit protein uS8.